A 340-amino-acid polypeptide reads, in one-letter code: Phosphatidylglycerol--prolipoprotein diacylglyceryl transferase (340 aa).

4 helical membrane passes run 19-39, 54-74, 93-113, and 119-139; these read IPLRGYAFCIIIGVFVAVWLG, ADIAVWAVPFGLVGGRLYHVI, IWEGGLGIWGAIALGAVGAWI, and GIPLPAWADAVAPGIAFAQAF. Arginine 141 lines the a 1,2-diacyl-sn-glycero-3-phospho-(1'-sn-glycerol) pocket. Helical transmembrane passes span 176-196, 202-221, and 238-258; these read HPTFLYESLWCVGVGFLVIWA, LGHGRAFALYVAAYCVGRAW, and LNDWTAIAVFLLAVLYIVLSS. Positions 266 to 340 are disordered; sequence EIVEPGASDT…ESAAESAKKV (75 aa). Residues 284-294 are compositionally biased toward basic and acidic residues; sequence DLGKDEDKATT. Low complexity predominate over residues 295-307; that stretch reads DKATATDTSTTTD. Basic and acidic residues predominate over residues 326-340; sequence PSEKTESAAESAKKV.

This sequence belongs to the Lgt family.

It is found in the cell membrane. It carries out the reaction L-cysteinyl-[prolipoprotein] + a 1,2-diacyl-sn-glycero-3-phospho-(1'-sn-glycerol) = an S-1,2-diacyl-sn-glyceryl-L-cysteinyl-[prolipoprotein] + sn-glycerol 1-phosphate + H(+). Its pathway is protein modification; lipoprotein biosynthesis (diacylglyceryl transfer). Its function is as follows. Catalyzes the transfer of the diacylglyceryl group from phosphatidylglycerol to the sulfhydryl group of the N-terminal cysteine of a prolipoprotein, the first step in the formation of mature lipoproteins. This is Phosphatidylglycerol--prolipoprotein diacylglyceryl transferase from Streptomyces avermitilis (strain ATCC 31267 / DSM 46492 / JCM 5070 / NBRC 14893 / NCIMB 12804 / NRRL 8165 / MA-4680).